The sequence spans 341 residues: Ketol-acid reductoisomerase (NADP(+)) (341 aa).

The KARI N-terminal Rossmann domain maps to 1-182 (MTELFYDDDA…GGTRAGVIKT (182 aa)). Residues 25 to 28 (YGSQ), Ser-51, Ser-53, and 83 to 86 (DQVQ) contribute to the NADP(+) site. The active site involves His-108. Gly-134 contributes to the NADP(+) binding site. Residues 183-328 (TFTEETETDL…RELRKLFSWI (146 aa)) form the KARI C-terminal knotted domain. Asp-191, Glu-195, Glu-227, and Glu-231 together coordinate Mg(2+). Ser-252 is a substrate binding site.

The protein belongs to the ketol-acid reductoisomerase family. Mg(2+) serves as cofactor.

It carries out the reaction (2R)-2,3-dihydroxy-3-methylbutanoate + NADP(+) = (2S)-2-acetolactate + NADPH + H(+). The catalysed reaction is (2R,3R)-2,3-dihydroxy-3-methylpentanoate + NADP(+) = (S)-2-ethyl-2-hydroxy-3-oxobutanoate + NADPH + H(+). It functions in the pathway amino-acid biosynthesis; L-isoleucine biosynthesis; L-isoleucine from 2-oxobutanoate: step 2/4. Its pathway is amino-acid biosynthesis; L-valine biosynthesis; L-valine from pyruvate: step 2/4. Involved in the biosynthesis of branched-chain amino acids (BCAA). Catalyzes an alkyl-migration followed by a ketol-acid reduction of (S)-2-acetolactate (S2AL) to yield (R)-2,3-dihydroxy-isovalerate. In the isomerase reaction, S2AL is rearranged via a Mg-dependent methyl migration to produce 3-hydroxy-3-methyl-2-ketobutyrate (HMKB). In the reductase reaction, this 2-ketoacid undergoes a metal-dependent reduction by NADPH to yield (R)-2,3-dihydroxy-isovalerate. The chain is Ketol-acid reductoisomerase (NADP(+)) from Renibacterium salmoninarum (strain ATCC 33209 / DSM 20767 / JCM 11484 / NBRC 15589 / NCIMB 2235).